The primary structure comprises 392 residues: MKPIIYIKYGELTLKGKNRAQFIKVLVHNIKQMLLEYHELVYQVGYDNLKIINLEKYNLQQVINDLQQVYGIAFICVAYQVNKEINEIQLACNKLVNNTDQTFKIEARRNDKSFIYDSMQIKQICATYLLQNQPTLKVDVHHPQLLINIEIKHDCAIVYGHKIPGAKGLPVGINGKALVLLSGGIDSPVASRLIMKRGISVDFITFITPPHTSQKALDKTIALAKQITLNNHLTKANLYVCNFTKLQEEIAHISKESYRITLMRRYFMRIAKRLAIDIKAGALVTGEALGQVASQTLNSMQTISSVLNDFLVLRPLITYDKQEIISLAKQFNTYELSILPYDDSCSLFAPKNPTTNPNVQTAMKLEQESLVLDAIYELVFTKEITKINLSSK.

The region spanning glutamine 60–lysine 162 is the THUMP domain. ATP-binding positions include leucine 180–leucine 181, threonine 205–phenylalanine 206, arginine 264, glycine 286, and glutamine 295.

It belongs to the ThiI family.

Its subcellular location is the cytoplasm. The enzyme catalyses [ThiI sulfur-carrier protein]-S-sulfanyl-L-cysteine + a uridine in tRNA + 2 reduced [2Fe-2S]-[ferredoxin] + ATP + H(+) = [ThiI sulfur-carrier protein]-L-cysteine + a 4-thiouridine in tRNA + 2 oxidized [2Fe-2S]-[ferredoxin] + AMP + diphosphate. It catalyses the reaction [ThiS sulfur-carrier protein]-C-terminal Gly-Gly-AMP + S-sulfanyl-L-cysteinyl-[cysteine desulfurase] + AH2 = [ThiS sulfur-carrier protein]-C-terminal-Gly-aminoethanethioate + L-cysteinyl-[cysteine desulfurase] + A + AMP + 2 H(+). It functions in the pathway cofactor biosynthesis; thiamine diphosphate biosynthesis. Functionally, catalyzes the ATP-dependent transfer of a sulfur to tRNA to produce 4-thiouridine in position 8 of tRNAs, which functions as a near-UV photosensor. Also catalyzes the transfer of sulfur to the sulfur carrier protein ThiS, forming ThiS-thiocarboxylate. This is a step in the synthesis of thiazole, in the thiamine biosynthesis pathway. The sulfur is donated as persulfide by IscS. The polypeptide is Probable tRNA sulfurtransferase (Ureaplasma urealyticum serovar 10 (strain ATCC 33699 / Western)).